Here is a 311-residue protein sequence, read N- to C-terminus: N-acetylmuramic acid 6-phosphate etherase (311 aa).

The region spanning 64–227 (IYQRLIDNGR…SSGVMIKLGK (164 aa)) is the SIS domain. Glu92 acts as the Proton donor in catalysis. Glu123 is a catalytic residue.

This sequence belongs to the GCKR-like family. MurNAc-6-P etherase subfamily. As to quaternary structure, homodimer.

The catalysed reaction is N-acetyl-D-muramate 6-phosphate + H2O = N-acetyl-D-glucosamine 6-phosphate + (R)-lactate. Its pathway is amino-sugar metabolism; N-acetylmuramate degradation. In terms of biological role, specifically catalyzes the cleavage of the D-lactyl ether substituent of MurNAc 6-phosphate, producing GlcNAc 6-phosphate and D-lactate. In Prochlorococcus marinus (strain SARG / CCMP1375 / SS120), this protein is N-acetylmuramic acid 6-phosphate etherase.